The primary structure comprises 2055 residues: Protein PHOTOPERIOD-INDEPENDENT EARLY FLOWERING 1 (2055 aa).

Residues 1-47 (MASKGGKSKPDIVMASKSGKSKPDNESRAKRQKTLEAPKEPRRPKTH) are disordered. Residues 21-47 (SKPDNESRAKRQKTLEAPKEPRRPKTH) show a composition bias toward basic and acidic residues. The Nuclear localization signal 1 signature appears at 29–36 (AKRQKTLE). The HSA domain occupies 35-107 (LEAPKEPRRP…EEQRLRKVAL (73 aa)). Coiled coils occupy residues 78–147 (LRAS…LEFL) and 229–250 (EEDEKHFTKRERQEELEALQNE). Disordered stretches follow at residues 183–332 (KSDE…SNDS) and 340–359 (ETHSHDLEPGMTTASVKSRK). Acidic residues predominate over residues 208–230 (ELDEDYDLKSEDETEDDEDTIEE). Basic and acidic residues-rich tracts occupy residues 231–243 (DEKHFTKRERQEE) and 267–276 (VSRETSPVKD). Residues 392–416 (EEELAKADNEDHVEEIALLQKESEM) adopt a coiled-coil conformation. The segment at 432–461 (KDISEDESESSFAVSEDSIVDSDENRQQAD) is disordered. In terms of domain architecture, Helicase ATP-binding spans 548-713 (VTMYEKKLNG…WSLMHFLMPH (166 aa)). 561–568 (DEMGLGKT) contacts ATP. The DEAH box motif lies at 664–667 (DEAH). Residues 1076–1229 (KLQELAMLLR…NLVIQNGEYN (154 aa)) form the Helicase C-terminal domain. The segment at 1293–1313 (EEAVDNQEFTEEPVERPEDDE) is disordered. Residues 1419–1492 (FEEKEWELDH…EREAAEVAEM (74 aa)) adopt a coiled-coil conformation. Short sequence motifs (nuclear localization signal) lie at residues 1506 to 1513 (KKKKKAKK) and 1570 to 1577 (KKRDLIVD). Positions 1577–1597 (DTDEEKTSKKKAKKHKKSLPN) are disordered. Basic residues predominate over residues 1584–1594 (SKKKAKKHKKS). Positions 1673–1727 (SWLPQEDAILCAMVHEYGPNWNFVSGTLYGMTAGGAYRGRYRHPAYCCERYRELI) constitute a Myb-like domain. Disordered stretches follow at residues 1843–1864 (ALQDSGPSQPDNTISRSRLQET) and 1951–1977 (KSRTGTKAQSLGKHKLSASDSAKSTKS). Residues 1844–1864 (LQDSGPSQPDNTISRSRLQET) show a composition bias toward polar residues. Positions 2006–2029 (GDREEEEEQEVDEKANSAEIEMIS) form a coiled coil.

This sequence belongs to the SNF2/RAD54 helicase family. SWR1 subfamily. As to quaternary structure, component of the SWR1 chromatin-remodeling complex composed of at least ARP6/ESD1/SUF3, PIE1, SWC6, SWC2 and H2AZs (HTA8, HTA9, HTA11). Interacts (via c-terminus) with SWC6 and ARP6 and (via N-terminus) with H2AZs. In terms of tissue distribution, expressed in ovules, but not in stamens.

The protein localises to the nucleus. It carries out the reaction ATP + H2O = ADP + phosphate + H(+). Functionally, component of the SWR1 complex which mediates the ATP-dependent exchange of histone H2A for the H2A variant H2A.F/Z leading to transcriptional regulation of selected genes (e.g. FLC) by chromatin remodeling. Probable DNA-dependent ATPase. Not involved in the repression of FLC in gametophytes, but required for the reactivation of FLC in early embryos and for the maintenance of full activation of FLC in late embryos. This chain is Protein PHOTOPERIOD-INDEPENDENT EARLY FLOWERING 1 (PIE1), found in Arabidopsis thaliana (Mouse-ear cress).